A 123-amino-acid chain; its full sequence is Small ribosomal subunit protein bS16 (123 aa).

The protein belongs to the bacterial ribosomal protein bS16 family.

In Treponema pallidum (strain Nichols), this protein is Small ribosomal subunit protein bS16.